The following is a 55-amino-acid chain: Large ribosomal subunit protein bL33 (55 aa).

It belongs to the bacterial ribosomal protein bL33 family.

In Brucella abortus (strain S19), this protein is Large ribosomal subunit protein bL33.